Reading from the N-terminus, the 301-residue chain is Putative ribosomal RNA methyltransferase PB17E12.10c (301 aa).

S-adenosyl-L-methionine contacts are provided by Gly87, Trp89, Asp107, and Asp186. The active-site Proton acceptor is the Lys247.

The protein belongs to the class I-like SAM-binding methyltransferase superfamily. RNA methyltransferase RlmE family.

It catalyses the reaction a uridine in rRNA + S-adenosyl-L-methionine = a 2'-O-methyluridine in rRNA + S-adenosyl-L-homocysteine + H(+). This Schizosaccharomyces pombe (strain 972 / ATCC 24843) (Fission yeast) protein is Putative ribosomal RNA methyltransferase PB17E12.10c.